An 89-amino-acid chain; its full sequence is Venom peptide BmKAPI (89 aa).

The signal sequence occupies residues 1–22; it reads MKFVFASFALFVIFLCFSQSLS. 5 cysteine pairs are disulfide-bonded: Cys-28–Cys-66, Cys-37–Cys-62, Cys-41–Cys-55, Cys-46–Cys-86, and Cys-68–Cys-80. Residues 28-86 enclose the TIL domain; it reads CRDNEVFDNCISNCGPPRCSNILNTYPCTNLGPLCTPGCKCKDGRVYDNQGRCVLQTEC.

The protein belongs to the serine protease inhibitor-like (TIL domain-containing) family. As to expression, expressed by the venom gland.

Its subcellular location is the secreted. In terms of biological role, serine protease inhibitor. This Olivierus martensii (Manchurian scorpion) protein is Venom peptide BmKAPI.